We begin with the raw amino-acid sequence, 504 residues long: Xylose import ATP-binding protein XylG (504 aa).

2 ABC transporter domains span residues 6 to 243 (LEMQ…VGRE) and 262 to 504 (VRNF…TGGK). ATP is bound at residue 38 to 45 (GENGAGKS).

It belongs to the ABC transporter superfamily. Xylose importer (TC 3.A.1.2.4) family. As to quaternary structure, the complex is composed of two ATP-binding proteins (XylG), two transmembrane proteins (XylH) and a solute-binding protein (XylF).

Its subcellular location is the cell membrane. The enzyme catalyses D-xylose(out) + ATP + H2O = D-xylose(in) + ADP + phosphate + H(+). Its function is as follows. Part of the ABC transporter complex XylFGH involved in xylose import. Responsible for energy coupling to the transport system. This Moorella thermoacetica (strain ATCC 39073 / JCM 9320) protein is Xylose import ATP-binding protein XylG.